The chain runs to 603 residues: Translation initiation factor IF-2 (603 aa).

In terms of domain architecture, tr-type G spans 112-279; sequence TRPPIITIMG…NINLQAEILD (168 aa). A G1 region spans residues 121–128; the sequence is GHVDHGKT. 121 to 128 lines the GTP pocket; the sequence is GHVDHGKT. Residues 146-150 are G2; that stretch reads GITQH. Residues 167–170 are G3; sequence DTPG. GTP contacts are provided by residues 167–171 and 221–224; these read DTPGH and NKMD. The G4 stretch occupies residues 221–224; it reads NKMD. Positions 257–259 are G5; it reads SAL.

It belongs to the TRAFAC class translation factor GTPase superfamily. Classic translation factor GTPase family. IF-2 subfamily.

Its subcellular location is the cytoplasm. Functionally, one of the essential components for the initiation of protein synthesis. Protects formylmethionyl-tRNA from spontaneous hydrolysis and promotes its binding to the 30S ribosomal subunits. Also involved in the hydrolysis of GTP during the formation of the 70S ribosomal complex. The sequence is that of Translation initiation factor IF-2 from Mycoplasmopsis pulmonis (strain UAB CTIP) (Mycoplasma pulmonis).